The primary structure comprises 497 residues: Glutamyl-tRNA reductase (497 aa).

Substrate contacts are provided by residues 58–61 (TCNR), Ser-118, 123–125 (EQQ), and Gln-129. Cys-59 functions as the Nucleophile in the catalytic mechanism. 214–219 (GAGAMA) contributes to the NADP(+) binding site. The segment covering 461–477 (VTQPGQADSSAAQTAGT) has biased composition (polar residues). The disordered stretch occupies residues 461–486 (VTQPGQADSSAAQTAGTSARADQIPS).

Belongs to the glutamyl-tRNA reductase family. In terms of assembly, homodimer.

The catalysed reaction is (S)-4-amino-5-oxopentanoate + tRNA(Glu) + NADP(+) = L-glutamyl-tRNA(Glu) + NADPH + H(+). It participates in porphyrin-containing compound metabolism; protoporphyrin-IX biosynthesis; 5-aminolevulinate from L-glutamyl-tRNA(Glu): step 1/2. In terms of biological role, catalyzes the NADPH-dependent reduction of glutamyl-tRNA(Glu) to glutamate 1-semialdehyde (GSA). The polypeptide is Glutamyl-tRNA reductase (Corynebacterium jeikeium (strain K411)).